The following is a 27-amino-acid chain: Peptide Cn29 (27 aa).

3 disulfide bridges follow: C2/C23, C5/C18, and C12/C25.

As to expression, expressed by the venom gland.

It localises to the secreted. The protein is Peptide Cn29 of Centruroides noxius (Mexican scorpion).